We begin with the raw amino-acid sequence, 441 residues long: Amino-acid acetyltransferase (441 aa).

One can recognise an N-acetyltransferase domain in the interval 295 to 434; it reads EQVRRATIND…QALYNYQRRS (140 aa).

It belongs to the acetyltransferase family. ArgA subfamily. As to quaternary structure, homohexamer.

The protein localises to the cytoplasm. The enzyme catalyses L-glutamate + acetyl-CoA = N-acetyl-L-glutamate + CoA + H(+). Its pathway is amino-acid biosynthesis; L-arginine biosynthesis; N(2)-acetyl-L-ornithine from L-glutamate: step 1/4. This chain is Amino-acid acetyltransferase, found in Pectobacterium atrosepticum (strain SCRI 1043 / ATCC BAA-672) (Erwinia carotovora subsp. atroseptica).